The following is a 209-amino-acid chain: Isopentenyl-diphosphate Delta-isomerase (209 aa).

2 residues coordinate Mn(2+): H31 and H38. The 136-residue stretch at 36 to 171 (PLHLAFSVYI…RLLVSPWCRA (136 aa)) folds into the Nudix hydrolase domain. Residue C73 is part of the active site. C73 contacts Mg(2+). H75 contacts Mn(2+). E93 contacts Mg(2+). E120 and E122 together coordinate Mn(2+). The active site involves E122.

The protein belongs to the IPP isomerase type 1 family. The cofactor is Mg(2+). Requires Mn(2+) as cofactor.

The protein localises to the cytoplasm. The enzyme catalyses isopentenyl diphosphate = dimethylallyl diphosphate. It participates in isoprenoid biosynthesis; dimethylallyl diphosphate biosynthesis; dimethylallyl diphosphate from isopentenyl diphosphate: step 1/1. Functionally, catalyzes the 1,3-allylic rearrangement of the homoallylic substrate isopentenyl (IPP) to its highly electrophilic allylic isomer, dimethylallyl diphosphate (DMAPP). This Rhizobium rhizogenes (Agrobacterium rhizogenes) protein is Isopentenyl-diphosphate Delta-isomerase.